Consider the following 153-residue polypeptide: Aspartate carbamoyltransferase regulatory chain (153 aa).

Zn(2+) contacts are provided by Cys-109, Cys-114, Cys-138, and Cys-141.

This sequence belongs to the PyrI family. As to quaternary structure, contains catalytic and regulatory chains. Zn(2+) is required as a cofactor.

In terms of biological role, involved in allosteric regulation of aspartate carbamoyltransferase. In Shigella flexneri serotype 5b (strain 8401), this protein is Aspartate carbamoyltransferase regulatory chain.